We begin with the raw amino-acid sequence, 531 residues long: 5-(hydroxymethyl)furfural oxidase (531 aa).

Residues Thr15–Ala16, Glu36–Ala37, Trp68, Leu94, Gly98, Asn102–Val105, Val233, and Trp466 each bind FAD. The active-site Proton acceptor is the His467. FAD contacts are provided by residues Ala501 and Thr512 to Asn513.

It belongs to the GMC oxidoreductase family. In terms of assembly, monomer. FAD is required as a cofactor.

The catalysed reaction is 5-hydroxymethylfurfural + 3 O2 + 2 H2O = 2,5-dicarboxyfuran + 3 H2O2 + 2 H(+). The enzyme catalyses benzylthiol + O2 = benzothialdehyde + H2O2. Its function is as follows. Involved in the degradation and detoxification of 5-(hydroxymethyl)furfural (HMF) by mediating its oxidation to furan-2,5-dicarboxylate (FDCA), a biobased platform chemical for the production of polymers. Active with a wide range of aromatic and aliphatic primary alcohols and aldehydes: acts on alcohol groups and requires the spontaneous hydration of aldehyde groups for their oxidation. To a lesser extent, is also able to catalyze the oxidation of thiols that are structurally similar to its alcohol substrates, yielding the corresponding thiocarbonyls. This Methylovorus sp. (strain MP688) protein is 5-(hydroxymethyl)furfural oxidase.